Reading from the N-terminus, the 71-residue chain is Small ribosomal subunit protein bS21 (71 aa).

The interval 37–71 (HYEKPTAERKRKKAAAVKRHMKKLSRDNARRVKLY) is disordered. The span at 45 to 59 (RKRKKAAAVKRHMKK) shows a compositional bias: basic residues. Over residues 60–71 (LSRDNARRVKLY) the composition is skewed to basic and acidic residues.

The protein belongs to the bacterial ribosomal protein bS21 family.

The sequence is that of Small ribosomal subunit protein bS21 from Pseudoalteromonas translucida (strain TAC 125).